The following is a 558-amino-acid chain: Type I restriction enzyme MjaIX methylase subunit (558 aa).

A disordered region spans residues 1–37 (MATLDKFLSIKENDEKTKKKESKKKSSKSNKTSESLV). A compositionally biased stretch (basic and acidic residues) spans 8-18 (LSIKENDEKTK). A compositionally biased stretch (basic residues) spans 19–28 (KKESKKKSSK). Residues 227 to 232 (KFYTPR), 256 to 258 (SGG), and Asp-283 contribute to the S-adenosyl-L-methionine site.

Belongs to the N(4)/N(6)-methyltransferase family. The type I restriction/modification system is composed of three polypeptides R, M and S.

The catalysed reaction is a 2'-deoxyadenosine in DNA + S-adenosyl-L-methionine = an N(6)-methyl-2'-deoxyadenosine in DNA + S-adenosyl-L-homocysteine + H(+). In terms of biological role, the subtype gamma methyltransferase (M) subunit of a type I restriction enzyme. The M and S subunits together form a methyltransferase (MTase) that methylates A-3 on the top and A-2 on the bottom strand of the sequence 5'-CCAN(5)GTR-3'. In the presence of the R subunit the complex can also act as an endonuclease, binding to the same target sequence but cutting the DNA some distance from this site. Whether the DNA is cut or modified depends on the methylation state of the target sequence. When the target site is unmodified, the DNA is cut. When the target site is hemimethylated, the complex acts as a maintenance MTase modifying the DNA so that both strands become methylated. After locating a non-methylated recognition site, the enzyme complex serves as a molecular motor that translocates DNA in an ATP-dependent manner until a collision occurs that triggers cleavage. The protein is Type I restriction enzyme MjaIX methylase subunit of Methanocaldococcus jannaschii (strain ATCC 43067 / DSM 2661 / JAL-1 / JCM 10045 / NBRC 100440) (Methanococcus jannaschii).